The sequence spans 591 residues: MMRSHYCGQLNETLEGQEITLCGWVHRRRDHGGVIFLDIRDRDGLAQVVFDPDRAESFAAADRVRSEYVVKITGKVRLRPAGAVNKNMASGGIEVLGYELEVLNESETPPFPLNEYSDVGEETRLRYRFLDLRRPEMAEKLRLRSRMTTSIRRFLDENGFLDVETPILTRATPEGARDYLVPSRTHAGSFFALPQSPQLFKQLLMVAGFDRYYQIAKCFRDEDLRADRQPEFTQIDIETSFLDEKEIMGLTEQMIRNLFKEVLDLEFGDFPHMTFEEAMRRYGSDKPDLRNPLELVDVADQLKDVDFKVFSGPANDPKCRIAALRVPGGASMPRKQIDDYTKFVGIYGAKGLAYIKVNERANGVDGLQSPIVKNIPLDNLNAILDRVGAVDGDIVFFGADKAKIVSEALGALRIKLGHDLNLLTCEWAPMWVVDFPMFEENDDGSFSALHHPFTAPKCSPAELEANPAGALSRAYDMVLNGTELGGGSIRIHRKEMQQAVFRLLGINEAEQEEKFGFLLDALKYGAPPHGGLAFGLDRLVMLMTGAQSIREVIAFPKTQSAADVMTQAPGVVDAKALRELHIRLRETPKAE.

E174 serves as a coordination point for L-aspartate. The interval 198-201 is aspartate; sequence QLFK. R220 is a binding site for L-aspartate. ATP is bound by residues 220–222 and Q229; that span reads RDE. H450 contacts L-aspartate. An ATP-binding site is contributed by E483. Residue R490 participates in L-aspartate binding. 535–538 is an ATP binding site; the sequence is GLDR.

It belongs to the class-II aminoacyl-tRNA synthetase family. Type 1 subfamily. As to quaternary structure, homodimer.

Its subcellular location is the cytoplasm. It carries out the reaction tRNA(Asx) + L-aspartate + ATP = L-aspartyl-tRNA(Asx) + AMP + diphosphate. In terms of biological role, aspartyl-tRNA synthetase with relaxed tRNA specificity since it is able to aspartylate not only its cognate tRNA(Asp) but also tRNA(Asn). Reaction proceeds in two steps: L-aspartate is first activated by ATP to form Asp-AMP and then transferred to the acceptor end of tRNA(Asp/Asn). The protein is Aspartate--tRNA(Asp/Asn) ligase of Pseudomonas fluorescens (strain SBW25).